A 259-amino-acid chain; its full sequence is Ribonuclease PH (259 aa).

Phosphate contacts are provided by residues R88 and 126 to 128 (GTR).

Belongs to the RNase PH family. As to quaternary structure, homohexameric ring arranged as a trimer of dimers.

The catalysed reaction is tRNA(n+1) + phosphate = tRNA(n) + a ribonucleoside 5'-diphosphate. Its function is as follows. Phosphorolytic 3'-5' exoribonuclease that plays an important role in tRNA 3'-end maturation. Removes nucleotide residues following the 3'-CCA terminus of tRNAs; can also add nucleotides to the ends of RNA molecules by using nucleoside diphosphates as substrates, but this may not be physiologically important. Probably plays a role in initiation of 16S rRNA degradation (leading to ribosome degradation) during starvation. This chain is Ribonuclease PH, found in Mycobacterium bovis (strain ATCC BAA-935 / AF2122/97).